A 69-amino-acid polypeptide reads, in one-letter code: Cytochrome c oxidase subunit 8A, mitochondrial (69 aa).

A mitochondrion-targeting transit peptide spans 1–25 (MSVLTPLLLRGLTGSARRLPVPRAK). An SIFI-degron motif is present at residues 2-19 (SVLTPLLLRGLTGSARRL). Over 26–36 (IHSLPPEEKLG) the chain is Mitochondrial matrix. The helical transmembrane segment at 37-60 (IMELAVGLTSCFVTFLLPAGWILS) threads the bilayer. The Mitochondrial intermembrane segment spans residues 61–69 (HLETYRRPE).

The protein belongs to the cytochrome c oxidase VIII family. Component of the cytochrome c oxidase (complex IV, CIV), a multisubunit enzyme composed of 14 subunits. The complex is composed of a catalytic core of 3 subunits MT-CO1, MT-CO2 and MT-CO3, encoded in the mitochondrial DNA, and 11 supernumerary subunits COX4I, COX5A, COX5B, COX6A, COX6B, COX6C, COX7A, COX7B, COX7C, COX8 and NDUFA4, which are encoded in the nuclear genome. The complex exists as a monomer or a dimer and forms supercomplexes (SCs) in the inner mitochondrial membrane with NADH-ubiquinone oxidoreductase (complex I, CI) and ubiquinol-cytochrome c oxidoreductase (cytochrome b-c1 complex, complex III, CIII), resulting in different assemblies (supercomplex SCI(1)III(2)IV(1) and megacomplex MCI(2)III(2)IV(2)). In terms of processing, in response to mitochondrial stress, the precursor protein is ubiquitinated by the SIFI complex in the cytoplasm before mitochondrial import, leading to its degradation. Within the SIFI complex, UBR4 initiates ubiquitin chain that are further elongated or branched by KCMF1.

It localises to the mitochondrion inner membrane. It participates in energy metabolism; oxidative phosphorylation. Component of the cytochrome c oxidase, the last enzyme in the mitochondrial electron transport chain which drives oxidative phosphorylation. The respiratory chain contains 3 multisubunit complexes succinate dehydrogenase (complex II, CII), ubiquinol-cytochrome c oxidoreductase (cytochrome b-c1 complex, complex III, CIII) and cytochrome c oxidase (complex IV, CIV), that cooperate to transfer electrons derived from NADH and succinate to molecular oxygen, creating an electrochemical gradient over the inner membrane that drives transmembrane transport and the ATP synthase. Cytochrome c oxidase is the component of the respiratory chain that catalyzes the reduction of oxygen to water. Electrons originating from reduced cytochrome c in the intermembrane space (IMS) are transferred via the dinuclear copper A center (CU(A)) of subunit 2 and heme A of subunit 1 to the active site in subunit 1, a binuclear center (BNC) formed by heme A3 and copper B (CU(B)). The BNC reduces molecular oxygen to 2 water molecules using 4 electrons from cytochrome c in the IMS and 4 protons from the mitochondrial matrix. This is Cytochrome c oxidase subunit 8A, mitochondrial (COX8A) from Hylobates agilis (Agile gibbon).